The following is a 65-amino-acid chain: Large ribosomal subunit protein bL35 (65 aa).

2 stretches are compositionally biased toward basic residues: residues 1–16 (MPKM…RFKK) and 31–45 (HRFH…RQLR). The disordered stretch occupies residues 1–47 (MPKMKTHRASAKRFKKTANGGLKSASAYTSHRFHGKTKKQRRQLRGT).

The protein belongs to the bacterial ribosomal protein bL35 family.

This chain is Large ribosomal subunit protein bL35, found in Leuconostoc citreum (strain KM20).